Here is a 204-residue protein sequence, read N- to C-terminus: Protein GrpE (204 aa).

Over residues 1 to 12 (MSNQEKKMHEEE) the composition is skewed to basic and acidic residues. The disordered stretch occupies residues 1–37 (MSNQEKKMHEEELQQQETVEADTEAEAEAVGTDADIE).

This sequence belongs to the GrpE family. Homodimer.

It localises to the cytoplasm. Its function is as follows. Participates actively in the response to hyperosmotic and heat shock by preventing the aggregation of stress-denatured proteins, in association with DnaK and GrpE. It is the nucleotide exchange factor for DnaK and may function as a thermosensor. Unfolded proteins bind initially to DnaJ; upon interaction with the DnaJ-bound protein, DnaK hydrolyzes its bound ATP, resulting in the formation of a stable complex. GrpE releases ADP from DnaK; ATP binding to DnaK triggers the release of the substrate protein, thus completing the reaction cycle. Several rounds of ATP-dependent interactions between DnaJ, DnaK and GrpE are required for fully efficient folding. This is Protein GrpE from Vibrio proteolyticus (Aeromonas proteolytica).